Consider the following 270-residue polypeptide: Malonyl-[acyl-carrier protein] O-methyltransferase (270 aa).

The protein belongs to the methyltransferase superfamily.

The catalysed reaction is malonyl-[ACP] + S-adenosyl-L-methionine = malonyl-[ACP] methyl ester + S-adenosyl-L-homocysteine. Its pathway is cofactor biosynthesis; biotin biosynthesis. Functionally, converts the free carboxyl group of a malonyl-thioester to its methyl ester by transfer of a methyl group from S-adenosyl-L-methionine (SAM). It allows to synthesize pimeloyl-ACP via the fatty acid synthetic pathway. This is Malonyl-[acyl-carrier protein] O-methyltransferase from Marinomonas sp. (strain MWYL1).